A 490-amino-acid chain; its full sequence is AP-5 complex subunit mu-1 (490 aa).

An MHD domain is found at 206-476 (KAQISISITE…LISSDYYIWN (271 aa)).

Belongs to the adaptor complexes medium subunit family. Probably part of the adaptor protein complex 5 (AP-5) a tetramer composed of AP5B1, AP5M1, AP5S1 and AP5Z1. Widely expressed, including in small intestine and testis. In small intestine, highly expressed in cytoplasm of villi epithelial cells and internal glands. In testis, selectively expressed in maturing sperm cells (at protein level).

The protein localises to the cytoplasm. Its subcellular location is the cytosol. The protein resides in the late endosome membrane. It is found in the lysosome membrane. As part of AP-5, a probable fifth adaptor protein complex it may be involved in endosomal transport. This is AP-5 complex subunit mu-1 (Ap5m1) from Mus musculus (Mouse).